Reading from the N-terminus, the 49-residue chain is Light-harvesting protein B-875 beta chain (49 aa).

At Ala-2 to Gly-27 the chain is on the cytoplasmic side. A bacteriochlorophyll contacts are provided by His-21 and His-39. A helical; Signal-anchor for type II membrane protein transmembrane segment spans residues Leu-28–Trp-45. The Periplasmic segment spans residues Arg-46 to Phe-49.

This sequence belongs to the antenna complex beta subunit family. The core complex is formed by different alpha and beta chains, binding bacteriochlorophyll molecules, and arranged most probably in tetrameric structures disposed around the reaction center. The non-pigmented gamma chains may constitute additional components.

The protein localises to the cell inner membrane. Antenna complexes are light-harvesting systems, which transfer the excitation energy to the reaction centers. The sequence is that of Light-harvesting protein B-875 beta chain (pufB) from Cereibacter sphaeroides (Rhodobacter sphaeroides).